Here is a 103-residue protein sequence, read N- to C-terminus: UPF0235 protein RL4503 (103 aa).

Belongs to the UPF0235 family.

This Rhizobium johnstonii (strain DSM 114642 / LMG 32736 / 3841) (Rhizobium leguminosarum bv. viciae) protein is UPF0235 protein RL4503.